The chain runs to 145 residues: Peroxide operon regulator (145 aa).

A DNA-binding region spans residues 1 to 78 (MAAHELKEAL…SGLVKELTYG (78 aa)). Zn(2+) contacts are provided by Cys96, Cys99, Cys136, and Cys139.

It belongs to the Fur family. As to quaternary structure, homodimer. Mn(2+) serves as cofactor. Fe(2+) is required as a cofactor. Requires Zn(2+) as cofactor. In terms of processing, possibly oxidized on a cysteine residue; the Cys-SOH formed in response to oxidative signaling may rapidly react with a Cys-SH to form a disulfide bond, leading to the loss of metal ion and inactivation of repressor function. Oxidized PerR can be further reduced by thiol reductants and repressor activity restored.

The protein localises to the cytoplasm. Its function is as follows. Hydrogen and organic peroxide sensor. Represses the expression of a regulon of peroxide-inducible genes such as katA, ahpC, ahpF, the heme biosynthesis operon (hemAXCDBL), fur, perR, zosA and mrgA. The polypeptide is Peroxide operon regulator (perR) (Bacillus subtilis (strain 168)).